A 570-amino-acid chain; its full sequence is Small ribosomal subunit protein bS1 (570 aa).

S1 motif domains lie at Gly-52–Glu-116, Gly-134–Arg-199, Gly-220–Lys-288, Gly-305–Lys-375, Gly-392–Lys-462, and Gly-479–Lys-548.

The protein belongs to the bacterial ribosomal protein bS1 family.

Its function is as follows. Binds mRNA; thus facilitating recognition of the initiation point. It is needed to translate mRNA with a short Shine-Dalgarno (SD) purine-rich sequence. The chain is Small ribosomal subunit protein bS1 (rpsA) from Chlamydia muridarum (strain MoPn / Nigg).